The primary structure comprises 97 residues: ESAT-6-like protein EsxG (97 aa).

Ser2 bears the N-acetylserine mark.

This sequence belongs to the WXG100 family. CFP-10 subfamily. As to quaternary structure, forms a tight 1:1 complex with EsxH.

It is found in the secreted. Functionally, esxG, in complex with EsxH, disrupts ESCRT function and impairs host phagosome maturation, thereby promoting intracellular bacterial growth. The complex acts by interacting, via EsxH, with the host hepatocyte growth factor-regulated tyrosine kinase substrate (HGS/HRS), a component of the ESCRT machinery. EsxG stabilizes EsxH in the host cytosol. The protein is ESAT-6-like protein EsxG of Mycobacterium tuberculosis (strain ATCC 25618 / H37Rv).